A 1064-amino-acid polypeptide reads, in one-letter code: Protein NLRC3 (1064 aa).

An NACHT domain is found at 138-459; the sequence is RVSLTIGVAG…YCFIHLSLQE (322 aa). Residue 144–151 coordinates ATP; it reads GVAGVGKT. LRR repeat units lie at residues 338–362, 570–593, 632–662, 664–687, 692–715, 720–743, 748–771, 776–799, 804–827, 832–855, 860–883, 888–911, 916–939, 972–995, 1000–1022, and 1028–1051; these read LGHL…LCEL, LSEL…TLAG, LPQL…VLSG, DCRI…ALAR, NRSL…ALAD, NRTL…CVAE, NQTI…QMAD, NRSL…ALAE, NQIL…VLMR, NQTL…ALTQ, NNTL…AIAV, NHSL…ALGQ, NRTL…SVAG, NRTL…ALAN, NSSL…IFVA, and NHGL…MISE.

The protein belongs to the NLRP family. As to quaternary structure, directly interacts (via CARD) with TMEM173/STING; this interaction reduces TMEM173 trafficking to the perinuclear region in response to interferon stimulatory DNA. Also interacts, but to a lesser extent, with TBK1. Interacts with TRAF6; this interaction results in decreased TRAF6 'Lys-63'-linked polyubiquitination, but leaves 'Lys-48'-linked chains unchanged, promoting TRAF6 protein degradation. Interacts with PIK3R1/PIK3R2; this interaction disrupts the association between PIK3R1/PIK3R2 and the p110 catalytic subunit PIK3CA/PIK3CB/PIK3CD and reduces PIK3R1/PIK3R2 activation. Weakly interacts with PYCARD/ASC. Interacts with CASP1 and CASP5. In terms of tissue distribution, expressed in bone marrow-derived macrophages.

It localises to the cytoplasm. Negative regulator of the innate immune response. Attenuates signaling pathways activated by Toll-like receptors (TLRs) and the DNA sensor STING/TMEM173 in response to pathogen-associated molecular patterns, such as intracellular poly(dA:dT), but not poly(I:C), or in response to DNA virus infection, including that of Herpes simplex virus 1 (HSV1). May affect TLR4 signaling by acting at the level of TRAF6 ubiquitination, decreasing the activating 'Lys-63'-linked ubiquitination and leaving unchanged the degradative 'Lys-48'-linked ubiquitination. Inhibits the PI3K-AKT-mTOR pathway possibly by directly interacting with the posphatidylinositol 3-kinase regulatory subunit p85 (PIK3R1/PIK3R2) and disrupting the association between PIK3R1/PIK3R2 and the catalytic subunit p110 (PIK3CA/PIK3CB/PIK3CD) and reducing PIK3R1/PIK3R2 activation. Via its regulation of the PI3K-AKT-mTOR pathway, controls cell proliferation, predominantly in intestinal epithelial cells. May also affect NOD1- or NOD2-mediated NF-kappa-B activation. Might also affect the inflammatory response by preventing NLRP3 inflammasome formation, CASP1 cleavage and IL1B maturation. The sequence is that of Protein NLRC3 (Nlrc3) from Mus musculus (Mouse).